A 143-amino-acid chain; its full sequence is Probable glycine cleavage system H protein (143 aa).

Residues Val-36 to Lys-118 form the Lipoyl-binding domain. Residue Lys-77 is modified to N6-lipoyllysine.

The protein belongs to the GcvH family. As to quaternary structure, the glycine cleavage system is composed of four proteins: P, T, L and H. It depends on (R)-lipoate as a cofactor.

The glycine cleavage system catalyzes the degradation of glycine. The H protein shuttles the methylamine group of glycine from the P protein to the T protein. The chain is Probable glycine cleavage system H protein from Aeropyrum pernix (strain ATCC 700893 / DSM 11879 / JCM 9820 / NBRC 100138 / K1).